The chain runs to 72 residues: Protein kish-A (72 aa).

The first 26 residues, M1 to S26, serve as a signal peptide directing secretion. Residues L27 to K53 are Extracellular-facing. N35 carries N-linked (GlcNAc...) asparagine glycosylation. Residues S54 to I71 traverse the membrane as a helical segment. Position 72 (Q72) is a topological domain, cytoplasmic.

It belongs to the KISH family.

It localises to the golgi apparatus membrane. In terms of biological role, involved in the early part of the secretory pathway. The sequence is that of Protein kish-A (TMEM167A) from Bos taurus (Bovine).